The primary structure comprises 226 residues: High affinity heme transporter (226 aa).

Residues 1 to 20 form the signal peptide; that stretch reads MISLKIYFVLIFLFLKGINS. The tract at residues 72 to 101 is heme binding; sequence CDTTILSETNNVTGSCYVANCANDTVLEIC. Residue Ser199 is the site of GPI-anchor amidated serine attachment. The propeptide at 200 to 226 is removed in mature form; sequence SASSTIFKPSYFISCLLSVGLYLVLNF.

It localises to the cell membrane. It is found in the vacuole membrane. Its function is as follows. High affinity heme transporter involved in the assimilation of exogenous heme during conditions of low cellular iron. The sequence is that of High affinity heme transporter from Schizosaccharomyces pombe (strain 972 / ATCC 24843) (Fission yeast).